A 273-amino-acid chain; its full sequence is DNA replication complex GINS protein psf2 (273 aa).

2 disordered regions span residues Lys88–Gly110 and Ala240–Leu273. Residues Ala244 to Gly257 show a composition bias toward basic and acidic residues. Acidic residues predominate over residues Gly261–Leu273.

It belongs to the GINS2/PSF2 family. In terms of assembly, component of the GINS complex which is a heterotetramer of div-26/sld5, drc-1/psf1, drc-2/psf2 and drc-3/psf3.

The protein resides in the nucleus. Its function is as follows. The GINS complex plays an essential role in the initiation of DNA replication. Has a role in chromosome segregation. This Neurospora crassa (strain ATCC 24698 / 74-OR23-1A / CBS 708.71 / DSM 1257 / FGSC 987) protein is DNA replication complex GINS protein psf2 (drc-2).